The sequence spans 344 residues: Dihydroorotase (344 aa).

Zn(2+) contacts are provided by His-14 and His-16. Substrate-binding positions include 16–18 (HLR) and Asn-42. Zn(2+)-binding residues include Lys-100, His-137, and His-175. Lys-100 is subject to N6-carboxylysine. Position 137 (His-137) interacts with substrate. Position 220 (Leu-220) interacts with substrate. Position 248 (Asp-248) interacts with Zn(2+). Asp-248 is an active-site residue. Residues His-252 and Ala-264 each coordinate substrate.

It belongs to the metallo-dependent hydrolases superfamily. DHOase family. Class II DHOase subfamily. In terms of assembly, homodimer. The cofactor is Zn(2+).

It catalyses the reaction (S)-dihydroorotate + H2O = N-carbamoyl-L-aspartate + H(+). Its pathway is pyrimidine metabolism; UMP biosynthesis via de novo pathway; (S)-dihydroorotate from bicarbonate: step 3/3. Catalyzes the reversible cyclization of carbamoyl aspartate to dihydroorotate. This Ralstonia pickettii (strain 12J) protein is Dihydroorotase.